The primary structure comprises 418 residues: Deubiquitinase and deneddylase Dub1 (418 aa).

Polar residues predominate over residues 1 to 10; that stretch reads MLSPTNSTSK. The tract at residues 1-23 is disordered; it reads MLSPTNSTSKKAPVPPQDSSKPV. The chain crosses the membrane as a helical span at residues 40–60; it reads TALAVLLVVVTLGLILLFYSF. Positions 72–143 are disordered; the sequence is TRPSTKEQPT…PPLPPKAPKP (72 aa). Residues 86-141 show a composition bias toward pro residues; that stretch reads VPLPSPPLAVPRPSTPPPPVISRPSTPPAPTPAISPPSTPSAPKPSTPPPLPPKAP. Active-site residues include His-288, Asp-305, and Cys-358.

It belongs to the peptidase C48 family.

The protein localises to the secreted. Its subcellular location is the host cell. The protein resides in the membrane. In terms of biological role, effector proteins function to alter host cell physiology and promote bacterial survival in host tissues. This protease possesses deubiquitinating and deneddylating activities. In Chlamydia trachomatis serovar D (strain ATCC VR-885 / DSM 19411 / UW-3/Cx), this protein is Deubiquitinase and deneddylase Dub1 (cdu1).